The primary structure comprises 213 residues: 3,4-dihydroxy-2-butanone 4-phosphate synthase (213 aa).

D-ribulose 5-phosphate-binding positions include 27-28 (RE), Asp-32, 140-144 (RTGHT), and Glu-164. Position 28 (Glu-28) interacts with Mg(2+). His-143 contacts Mg(2+).

The protein belongs to the DHBP synthase family. Homodimer. It depends on Mg(2+) as a cofactor. The cofactor is Mn(2+).

It carries out the reaction D-ribulose 5-phosphate = (2S)-2-hydroxy-3-oxobutyl phosphate + formate + H(+). It functions in the pathway cofactor biosynthesis; riboflavin biosynthesis; 2-hydroxy-3-oxobutyl phosphate from D-ribulose 5-phosphate: step 1/1. Functionally, catalyzes the conversion of D-ribulose 5-phosphate to formate and 3,4-dihydroxy-2-butanone 4-phosphate. The protein is 3,4-dihydroxy-2-butanone 4-phosphate synthase of Agrobacterium fabrum (strain C58 / ATCC 33970) (Agrobacterium tumefaciens (strain C58)).